The sequence spans 361 residues: Peptide chain release factor 1 (361 aa).

Gln235 carries the N5-methylglutamine modification.

The protein belongs to the prokaryotic/mitochondrial release factor family. Post-translationally, methylated by PrmC. Methylation increases the termination efficiency of RF1.

The protein localises to the cytoplasm. Its function is as follows. Peptide chain release factor 1 directs the termination of translation in response to the peptide chain termination codons UAG and UAA. The sequence is that of Peptide chain release factor 1 from Xanthomonas euvesicatoria pv. vesicatoria (strain 85-10) (Xanthomonas campestris pv. vesicatoria).